A 152-amino-acid chain; its full sequence is uncharacterized protein (152 aa).

Residues Thr-7–Ser-27 traverse the membrane as a helical segment.

Its subcellular location is the membrane. This is an uncharacterized protein from Methanocaldococcus jannaschii (strain ATCC 43067 / DSM 2661 / JAL-1 / JCM 10045 / NBRC 100440) (Methanococcus jannaschii).